The primary structure comprises 478 residues: Adenosylhomocysteinase (478 aa).

Substrate is bound by residues Thr67, Asp144, and Glu204. 205–207 is an NAD(+) binding site; it reads TTT. Substrate is bound by residues Lys234 and Asp238. NAD(+)-binding positions include Asn239, 268–273, Glu291, Asn326, 347–349, and Asn392; these read GYGDVG and IGH.

This sequence belongs to the adenosylhomocysteinase family. It depends on NAD(+) as a cofactor.

Its subcellular location is the cytoplasm. It carries out the reaction S-adenosyl-L-homocysteine + H2O = L-homocysteine + adenosine. The protein operates within amino-acid biosynthesis; L-homocysteine biosynthesis; L-homocysteine from S-adenosyl-L-homocysteine: step 1/1. In terms of biological role, may play a key role in the regulation of the intracellular concentration of adenosylhomocysteine. This is Adenosylhomocysteinase from Nitrosomonas europaea (strain ATCC 19718 / CIP 103999 / KCTC 2705 / NBRC 14298).